We begin with the raw amino-acid sequence, 660 residues long: Acetyl-coenzyme A synthetase (660 aa).

CoA is bound by residues Arg197–Lys200 and Thr317. Residues Gly397 to Pro399, Asp421 to Thr426, Asp512, and Arg528 contribute to the ATP site. Residue Ser536 coordinates CoA. Arg539 is an ATP binding site. Residues Val550 and Val555 each coordinate Mg(2+). Position 625 is an N6-acetyllysine (Lys625).

This sequence belongs to the ATP-dependent AMP-binding enzyme family. Mg(2+) serves as cofactor. In terms of processing, acetylated. Deacetylation by the SIR2-homolog deacetylase activates the enzyme.

It carries out the reaction acetate + ATP + CoA = acetyl-CoA + AMP + diphosphate. Its function is as follows. Catalyzes the conversion of acetate into acetyl-CoA (AcCoA), an essential intermediate at the junction of anabolic and catabolic pathways. AcsA undergoes a two-step reaction. In the first half reaction, AcsA combines acetate with ATP to form acetyl-adenylate (AcAMP) intermediate. In the second half reaction, it can then transfer the acetyl group from AcAMP to the sulfhydryl group of CoA, forming the product AcCoA. The protein is Acetyl-coenzyme A synthetase of Paraburkholderia phymatum (strain DSM 17167 / CIP 108236 / LMG 21445 / STM815) (Burkholderia phymatum).